Here is a 411-residue protein sequence, read N- to C-terminus: LL-diaminopimelate aminotransferase (411 aa).

Residues Tyr-15 and Gly-42 each coordinate substrate. Pyridoxal 5'-phosphate-binding positions include Tyr-72, 108–109 (SK), Tyr-132, Asn-187, Tyr-218, and 246–248 (SFS). Substrate-binding residues include Lys-109, Tyr-132, and Asn-187. At Lys-249 the chain carries N6-(pyridoxal phosphate)lysine. The pyridoxal 5'-phosphate site is built by Arg-257 and Asn-292. Substrate contacts are provided by Asn-292 and Arg-388.

This sequence belongs to the class-I pyridoxal-phosphate-dependent aminotransferase family. LL-diaminopimelate aminotransferase subfamily. As to quaternary structure, homodimer. The cofactor is pyridoxal 5'-phosphate.

It carries out the reaction (2S,6S)-2,6-diaminopimelate + 2-oxoglutarate = (S)-2,3,4,5-tetrahydrodipicolinate + L-glutamate + H2O + H(+). The protein operates within amino-acid biosynthesis; L-lysine biosynthesis via DAP pathway; LL-2,6-diaminopimelate from (S)-tetrahydrodipicolinate (aminotransferase route): step 1/1. Its function is as follows. Involved in the synthesis of meso-diaminopimelate (m-DAP or DL-DAP), required for both lysine and peptidoglycan biosynthesis. Catalyzes the direct conversion of tetrahydrodipicolinate to LL-diaminopimelate. This chain is LL-diaminopimelate aminotransferase, found in Geobacter sp. (strain M21).